Here is a 246-residue protein sequence, read N- to C-terminus: tRNA (guanine-N(7)-)-methyltransferase (246 aa).

Positions 1–26 (MIENPSPSAANLPEHPSTDASHPRNI) are disordered. 4 residues coordinate S-adenosyl-L-methionine: glutamate 75, glutamate 100, aspartate 127, and aspartate 150. Residue aspartate 150 is part of the active site. Position 154 (lysine 154) interacts with substrate. The interval 156-161 (KHNKRR) is interaction with RNA. Substrate contacts are provided by residues aspartate 186 and 225 to 228 (TKFE).

The protein belongs to the class I-like SAM-binding methyltransferase superfamily. TrmB family.

The enzyme catalyses guanosine(46) in tRNA + S-adenosyl-L-methionine = N(7)-methylguanosine(46) in tRNA + S-adenosyl-L-homocysteine. Its pathway is tRNA modification; N(7)-methylguanine-tRNA biosynthesis. Catalyzes the formation of N(7)-methylguanine at position 46 (m7G46) in tRNA. The polypeptide is tRNA (guanine-N(7)-)-methyltransferase (Polaromonas sp. (strain JS666 / ATCC BAA-500)).